The following is a 185-amino-acid chain: Elongation factor P (185 aa).

This sequence belongs to the elongation factor P family.

Its subcellular location is the cytoplasm. It participates in protein biosynthesis; polypeptide chain elongation. Involved in peptide bond synthesis. Stimulates efficient translation and peptide-bond synthesis on native or reconstituted 70S ribosomes in vitro. Probably functions indirectly by altering the affinity of the ribosome for aminoacyl-tRNA, thus increasing their reactivity as acceptors for peptidyl transferase. In Mesomycoplasma hyopneumoniae (strain 7448) (Mycoplasma hyopneumoniae), this protein is Elongation factor P.